The sequence spans 388 residues: Xylose isomerase (388 aa).

Catalysis depends on residues histidine 54 and aspartate 57. Positions 181, 217, 220, 245, 255, 257, and 287 each coordinate Mg(2+).

Belongs to the xylose isomerase family. Homotetramer. Mg(2+) serves as cofactor.

Its subcellular location is the cytoplasm. It catalyses the reaction alpha-D-xylose = alpha-D-xylulofuranose. In terms of biological role, involved in D-xylose catabolism. The polypeptide is Xylose isomerase (xylA) (Streptomyces murinus).